Reading from the N-terminus, the 134-residue chain is Large ribosomal subunit protein eL28 (134 aa).

S60 carries the phosphoserine modification.

The protein belongs to the eukaryotic ribosomal protein eL28 family. As to quaternary structure, component of the large ribosomal subunit (LSU). Mature yeast ribosomes consist of a small (40S) and a large (60S) subunit. The 40S small subunit contains 1 molecule of ribosomal RNA (18S rRNA) and at least 33 different proteins. The large 60S subunit contains 3 rRNA molecules (25S, 5.8S and 5S rRNA) and at least 46 different proteins.

It is found in the cytoplasm. Functionally, component of the ribosome, a large ribonucleoprotein complex responsible for the synthesis of proteins in the cell. The small ribosomal subunit (SSU) binds messenger RNAs (mRNAs) and translates the encoded message by selecting cognate aminoacyl-transfer RNA (tRNA) molecules. The large subunit (LSU) contains the ribosomal catalytic site termed the peptidyl transferase center (PTC), which catalyzes the formation of peptide bonds, thereby polymerizing the amino acids delivered by tRNAs into a polypeptide chain. The nascent polypeptides leave the ribosome through a tunnel in the LSU and interact with protein factors that function in enzymatic processing, targeting, and the membrane insertion of nascent chains at the exit of the ribosomal tunnel. In Schizosaccharomyces pombe (strain 972 / ATCC 24843) (Fission yeast), this protein is Large ribosomal subunit protein eL28 (rpl44).